Reading from the N-terminus, the 314-residue chain is Mitochondrial RNA-splicing protein MRS3 (314 aa).

Solcar repeat units lie at residues 31 to 118 (APLY…CKKN), 128 to 210 (HHPF…STKF), and 217 to 310 (YNPL…AKHF). The next 6 membrane-spanning stretches (helical) occupy residues 33–52 (LYHQ…SVMF), 93–112 (GVQS…FGTY), 130–149 (PFKT…ALMN), 185–204 (SYPT…FVIY), 219–238 (PLIH…AITT), and 285–298 (GWKP…PATA).

Belongs to the mitochondrial carrier (TC 2.A.29) family.

Its subcellular location is the mitochondrion inner membrane. In terms of biological role, MRS3 suppresses a mitochondrial splice defect in the first intron of the COB gene. It may act as a carrier, exerting its suppressor activity via modulation of solute concentrations in the mitochondrion (possibly of cations). This is Mitochondrial RNA-splicing protein MRS3 (MRS3) from Saccharomyces cerevisiae (strain ATCC 204508 / S288c) (Baker's yeast).